A 416-amino-acid chain; its full sequence is Sulfoquinovosyl glycerol-binding protein SmoF (416 aa).

The first 29 residues, 1 to 29 (MTLKTIRGKALMGAALCATMLTFSGQAFA), serve as a signal peptide directing secretion. Gln-40 contributes to the 3-(6-sulfo-alpha-D-quinovosyl)glycerol binding site. Residue His-41 participates in 6-sulfo-D-quinovose binding. Residues Ser-71, Asp-95, Asp-141, Gly-194, Thr-248, Gly-303, Trp-304, and Arg-373 each coordinate 3-(6-sulfo-alpha-D-quinovosyl)glycerol. Positions 303, 304, and 373 each coordinate 6-sulfo-D-quinovose.

It belongs to the bacterial solute-binding protein 1 family. As to quaternary structure, the complex is probably composed of two ATP-binding proteins (SmoE), two transmembrane proteins (SmoG and SmoH) and a solute-binding protein (SmoF).

The protein localises to the periplasm. In terms of biological role, part of the ABC transporter complex SmoEFGH involved in sulfoquinovosyl glycerol (SQGro) uptake. Binds sulfoquinovosyl glycerol (SQGro). Can also bind sulfoquinovose (SQ), methyl alpha-sulfoquinovoside (SQMe) and a short-chain derivative of sulfoquinovosyl diacylglycerol (SQDG). Cannot bind D-glucose and D-glucuronic acid. This Agrobacterium fabrum (strain C58 / ATCC 33970) (Agrobacterium tumefaciens (strain C58)) protein is Sulfoquinovosyl glycerol-binding protein SmoF.